Reading from the N-terminus, the 457-residue chain is Chromogranin-A (457 aa).

The N-terminal stretch at 1 to 18 is a signal peptide; that stretch reads MRSAAVLALLLCAGQVTA. A disulfide bond links C35 and C56. The segment at 41–59 is O-glycosylated at one site only in cerebrospinal fluid; it reads SDTLSKPSPMPVSQECFET. The disordered stretch occupies residues 88 to 440; the sequence is KERAHQQKKH…DQELESLSAI (353 aa). The span at 116-144 shows a compositional bias: basic and acidic residues; the sequence is ELKEAVEEPSSKDVMEKREDSKEAEKSGE. At S142 the chain carries Phosphoserine. Over residues 171–180 the composition is skewed to acidic residues; sequence GEEEEEEEEA. T181 and T183 each carry an O-linked (GalNAc...) threonine glycan. The segment at 181–191 is O-glycosylated at one site only in cerebrospinal fluid; it reads TNTHPPASLPS. Residues 182–191 show a composition bias toward polar residues; sequence NTHPPASLPS. Y194 carries the phosphotyrosine modification. S203 and S218 each carry phosphoserine. The span at 229-249 shows a compositional bias: acidic residues; sequence EEEEEEEEAEAGEEAVPEEEG. O-linked (GalNAc...) threonine glycosylation occurs at T251. Basic and acidic residues-rich tracts occupy residues 263 to 272 and 291 to 303; these read KEIRKGESRS and PEGKGEQEHSQQK. S270 and S300 each carry phosphoserine. At G319 the chain carries Glycine amide. A phosphoserine mark is found at S322, S333, and S371. Over residues 330-360 the composition is skewed to basic and acidic residues; that stretch reads ERLSKEWEDSKRWSKMDQLAKELTAEKRLEG. M372 is subject to Methionine sulfoxide. Phosphoserine occurs at positions 398, 402, 424, and 438. Over residues 414–431 the composition is skewed to basic and acidic residues; it reads YPEEKKEEEGSANRRPED. S424 is a glycosylation site (O-linked (Xyl...) (chondroitin sulfate) serine). An Arginine amide modification is found at R456.

It belongs to the chromogranin/secretogranin protein family. As to quaternary structure, self-interacts; self-assembly is promoted in vitro by chondroitin sulfate attachment which occurs at mildly acidic pH conditions. Interacts with SCG3. Interacts with ITPR1 in the secretory granules. Sulfated on tyrosine residues and/or contains sulfated glycans. Post-translationally, O-glycosylated with core 1 or possibly core 8 glycans. Contains chondroitin sulfate (CS); CS attachment is pH-dependent, being observed at mildly acidic conditions of pH 5 but not at neutral pH, and promotes self-assembly in vitro. In terms of processing, proteolytic processing gives rise to an additional longer form of catestatin (residues 358-390) which displays a less potent catecholamine release-inhibitory activity. Plasmin-mediated proteolytic processing can give rise to additional shorter and longer forms of catestatin peptides. As to expression, detected in cerebrospinal fluid (at protein level). Detected in urine (at protein level). In terms of tissue distribution, found in the brain.

The protein localises to the secreted. It is found in the cytoplasmic vesicle. The protein resides in the secretory vesicle. It localises to the neuronal dense core vesicle. Its function is as follows. Strongly inhibits glucose induced insulin release from the pancreas. Functionally, inhibits catecholamine release from chromaffin cells and noradrenergic neurons by acting as a non-competitive nicotinic cholinergic antagonist. Displays antibacterial activity against Gram-positive bacteria S.aureus and M.luteus, and Gram-negative bacteria E.coli and P.aeruginosa. Can induce mast cell migration, degranulation and production of cytokines and chemokines. Acts as a potent scavenger of free radicals in vitro. May play a role in the regulation of cardiac function and blood pressure. In terms of biological role, regulates granule biogenesis in endocrine cells by up-regulating the transcription of protease nexin 1 (SERPINE2) via a cAMP-PKA-SP1 pathway. This leads to inhibition of granule protein degradation in the Golgi complex which in turn promotes granule formation. The chain is Chromogranin-A (CHGA) from Homo sapiens (Human).